A 251-amino-acid polypeptide reads, in one-letter code: Gamma-glutamyl peptidase 5 (251 aa).

The 198-residue stretch at 17–214 (STFVKKAYGG…IDRVVNLKLM (198 aa)) folds into the Glutamine amidotransferase type-1 domain. The active-site Nucleophile is the Cys-101. Active-site residues include His-193 and Glu-195.

Belongs to the peptidase C26 family.

The protein localises to the cytoplasm. It is found in the cytosol. It participates in secondary metabolite biosynthesis. Its function is as follows. Involved in glucosinolate biosynthesis. Hydrolyzes the gamma-glutamyl peptide bond of several glutathione (GSH) conjugates to produce Cys-Gly conjugates related to glucosinolates. The gamma-Glu-Cys-Gly-GSH conjugates are the sulfur-donating molecule in glucosinolate biosynthesis. This Arabidopsis thaliana (Mouse-ear cress) protein is Gamma-glutamyl peptidase 5.